Here is a 359-residue protein sequence, read N- to C-terminus: Phosphoserine aminotransferase (359 aa).

R41 lines the L-glutamate pocket. Pyridoxal 5'-phosphate-binding positions include 75 to 76, W101, T152, D171, and Q194; that span reads AS. N6-(pyridoxal phosphate)lysine is present on K195. 236–237 contacts pyridoxal 5'-phosphate; it reads NT.

It belongs to the class-V pyridoxal-phosphate-dependent aminotransferase family. SerC subfamily. As to quaternary structure, homodimer. It depends on pyridoxal 5'-phosphate as a cofactor.

It is found in the cytoplasm. The enzyme catalyses O-phospho-L-serine + 2-oxoglutarate = 3-phosphooxypyruvate + L-glutamate. The catalysed reaction is 4-(phosphooxy)-L-threonine + 2-oxoglutarate = (R)-3-hydroxy-2-oxo-4-phosphooxybutanoate + L-glutamate. The protein operates within amino-acid biosynthesis; L-serine biosynthesis; L-serine from 3-phospho-D-glycerate: step 2/3. Its pathway is cofactor biosynthesis; pyridoxine 5'-phosphate biosynthesis; pyridoxine 5'-phosphate from D-erythrose 4-phosphate: step 3/5. Its function is as follows. Catalyzes the reversible conversion of 3-phosphohydroxypyruvate to phosphoserine and of 3-hydroxy-2-oxo-4-phosphonooxybutanoate to phosphohydroxythreonine. This Acinetobacter baumannii (strain AB307-0294) protein is Phosphoserine aminotransferase.